The chain runs to 307 residues: Mitochondrial brown fat uncoupling protein 1 (307 aa).

Over 1–10 the chain is Mitochondrial intermembrane; it reads MVSSTTSEVQ. Residues 11 to 32 traverse the membrane as a helical segment; the sequence is PTMGVKIFSAGVSACLADIITF. Solcar repeat units lie at residues 11–102, 111–201, and 210–295; these read PTMG…VQEY, ASLG…MKGA, and DDVP…LKKE. Residues 33–73 are Mitochondrial matrix-facing; the sequence is PLDTAKVRLQIQGEGQASSTIRYKGVLGTITTLAKTEGLPK. Fatty acid 16:0 is bound at residue lysine 56. The chain crosses the membrane as a helical span at residues 74 to 96; that stretch reads LYSGLPAGIQRQISFASLRIGLY. Residues 97–116 lie on the Mitochondrial intermembrane side of the membrane; sequence DTVQEYFSSGRETPASLGSK. Residues 117–133 traverse the membrane as a helical segment; the sequence is ISAGLMTGGVAVFIGQP. The Mitochondrial matrix segment spans residues 134–178; it reads TEVVKVRMQAQSHLHGIKPRYTGTYNAYRVIATTESLSTLWKGTT. Residues 179–195 traverse the membrane as a helical segment; the sequence is PNLMRNVIINCTELVTY. The Mitochondrial intermembrane segment spans residues 196–212; it reads DLMKGALVNHHILADDV. Residues 213 to 232 traverse the membrane as a helical segment; it reads PCHLLSALVAGFCTTLLASP. Over 233–266 the chain is Mitochondrial matrix; the sequence is VDVVKTRFINSLPGQYPSVPSCAMTMYTKEGPAA. Position 254 is a cysteine sulfenic acid (-SOH) (cysteine 254). A helical transmembrane segment spans residues 267–289; it reads FFKGFAPSFLRLGSWNVIMFVCF. Lysine 269 contributes to the fatty acid 16:0 binding site. Residues 290–307 are Mitochondrial intermembrane-facing; that stretch reads EQLKKELMKSRQTVDCTT.

Belongs to the mitochondrial carrier (TC 2.A.29) family. Most probably functions as a monomer. Binds one purine nucleotide per monomer. However, has also been suggested to function as a homodimer or a homotetramer. Tightly associates with cardiolipin in the mitochondrion inner membrane; may stabilize and regulate its activity. Post-translationally, may undergo ubiquitin-mediated proteasomal degradation. May undergo sulfenylation upon cold exposure. May increase the sensitivity of UCP1 thermogenic function to the activation by noradrenaline probably through structural effects. Brown adipose tissue.

The protein resides in the mitochondrion inner membrane. The enzyme catalyses H(+)(in) = H(+)(out). Has no constitutive proton transporter activity and has to be activated by long-chain fatty acids/LCFAs. Inhibited by purine nucleotides. Both purine nucleotides and LCFAs bind the cytosolic side of the transporter and directly compete to activate or inhibit it. Activated by noradrenaline and reactive oxygen species. Despite lacking canonical translational encoding for selenocysteine, a small pool of the protein has been observed to selectively incorporate selenocysteine at 'Cys-254'. Selenocysteine-modified protein is highly sensitive to redox modification and may constitute a pool of protein highly sensitive to activation by elevated levels of reactive oxygen species (ROS). In terms of biological role, mitochondrial protein responsible for thermogenic respiration, a specialized capacity of brown adipose tissue and beige fat that participates in non-shivering adaptive thermogenesis to temperature and diet variations and more generally to the regulation of energy balance. Functions as a long-chain fatty acid/LCFA and proton symporter, simultaneously transporting one LCFA and one proton through the inner mitochondrial membrane. However, LCFAs remaining associated with the transporter via their hydrophobic tails, it results in an apparent transport of protons activated by LCFAs. Thereby, dissipates the mitochondrial proton gradient and converts the energy of substrate oxydation into heat instead of ATP. Regulates the production of reactive oxygen species/ROS by mitochondria. This is Mitochondrial brown fat uncoupling protein 1 from Rattus norvegicus (Rat).